Here is a 624-residue protein sequence, read N- to C-terminus: Bifunctional protein ArgH (624 aa).

The interval 1 to 466 (MALWGGRFSQ…QERDNAGVKV (466 aa)) is argininosuccinate lyase. One can recognise an N-acetyltransferase domain in the interval 464 to 614 (VKVRPARLTD…DEVALEVNLQ (151 aa)). The interval 467–624 (RPARLTDLDA…EQVIIKSSVA (158 aa)) is probable acetyltransferase.

This sequence in the N-terminal section; belongs to the lyase 1 family. Argininosuccinate lyase subfamily.

It is found in the cytoplasm. It catalyses the reaction 2-(N(omega)-L-arginino)succinate = fumarate + L-arginine. It functions in the pathway amino-acid biosynthesis; L-arginine biosynthesis; L-arginine from L-ornithine and carbamoyl phosphate: step 3/3. This chain is Bifunctional protein ArgH (argH), found in Aliivibrio fischeri (strain ATCC 700601 / ES114) (Vibrio fischeri).